We begin with the raw amino-acid sequence, 237 residues long: Deoxyribose-phosphate aldolase (237 aa).

Residue Asp94 is the Proton donor/acceptor of the active site. Lys158 serves as the catalytic Schiff-base intermediate with acetaldehyde. Lys187 acts as the Proton donor/acceptor in catalysis.

The protein belongs to the DeoC/FbaB aldolase family. DeoC type 1 subfamily.

The protein localises to the cytoplasm. It catalyses the reaction 2-deoxy-D-ribose 5-phosphate = D-glyceraldehyde 3-phosphate + acetaldehyde. It functions in the pathway carbohydrate degradation; 2-deoxy-D-ribose 1-phosphate degradation; D-glyceraldehyde 3-phosphate and acetaldehyde from 2-deoxy-alpha-D-ribose 1-phosphate: step 2/2. In terms of biological role, catalyzes a reversible aldol reaction between acetaldehyde and D-glyceraldehyde 3-phosphate to generate 2-deoxy-D-ribose 5-phosphate. In Lactobacillus acidophilus (strain ATCC 700396 / NCK56 / N2 / NCFM), this protein is Deoxyribose-phosphate aldolase.